The sequence spans 122 residues: MVQRLTYRRRLSYRTTSNATKIVKTPGGRLVYQYIGKTGKVPRCGECGVNLAGIPALRPYQYKNLPKSRRTVSRAYGGSKCAKCVRNRIVRAFLIEEQKTAKIVFKKQQKDLKQKKDKKSSK.

This sequence belongs to the eukaryotic ribosomal protein eL34 family.

The sequence is that of Large ribosomal subunit protein eL34 (rpl34) from Dictyostelium discoideum (Social amoeba).